Here is a 356-residue protein sequence, read N- to C-terminus: uncharacterized protein (356 aa).

Transmembrane regions (helical) follow at residues 2–22 (IESI…FHRL), 35–55 (GYVT…PIPF), 76–96 (NMGY…FAFG), 99–119 (LLYG…GPFL), 124–144 (IVAL…LSIF), and 152–172 (EIAF…ITFV). Positions 218 to 353 (ESLALLLIDI…GRNQVMFNPI (136 aa)) constitute a GGDEF domain.

It is found in the cell membrane. This is an uncharacterized protein from Staphylococcus haemolyticus (strain JCSC1435).